Reading from the N-terminus, the 827-residue chain is Periplasmic nitrate reductase (827 aa).

Positions 1–32 (MNLSRRDFMKANAALAAASVAGLIIPVKNVNA) form a signal peptide, tat-type signal. Residues 37–93 (ITWDKAVCRFCGTGCAVLVGTKDGRVVASQGDPDAEVNRGLNCIKGYFLPKIMYGKD) enclose the 4Fe-4S Mo/W bis-MGD-type domain. Residues Cys-44, Cys-47, Cys-51, and Cys-79 each coordinate [4Fe-4S] cluster. Residues Lys-81, Gln-148, Asn-173, Cys-177, 210–217 (WGSNMAEM), 242–246 (STFEH), 261–263 (QSD), Met-372, Gln-376, Asn-482, 508–509 (SD), Lys-531, Asp-558, and 717–726 (TGRILEHWHT) contribute to the Mo-bis(molybdopterin guanine dinucleotide) site. Position 793 (Phe-793) interacts with substrate. Positions 801 and 818 each coordinate Mo-bis(molybdopterin guanine dinucleotide).

It belongs to the prokaryotic molybdopterin-containing oxidoreductase family. NasA/NapA/NarB subfamily. As to quaternary structure, component of the periplasmic nitrate reductase NapAB complex composed of NapA and NapB. The cofactor is [4Fe-4S] cluster. Requires Mo-bis(molybdopterin guanine dinucleotide) as cofactor. In terms of processing, predicted to be exported by the Tat system. The position of the signal peptide cleavage has not been experimentally proven.

The protein localises to the periplasm. The catalysed reaction is 2 Fe(II)-[cytochrome] + nitrate + 2 H(+) = 2 Fe(III)-[cytochrome] + nitrite + H2O. Its function is as follows. Catalytic subunit of the periplasmic nitrate reductase complex NapAB. Receives electrons from NapB and catalyzes the reduction of nitrate to nitrite. This is Periplasmic nitrate reductase from Histophilus somni (strain 2336) (Haemophilus somnus).